We begin with the raw amino-acid sequence, 147 residues long: MVHLTPDEKAAVTALWGKVNVDEVGGEALGRLLVVYPWTQRFFESFGDLSSPDAVMGNPKVKAHGKKVLGAFSDGLAHLDNLKGTFAQLSELHCDKLHVDPENFKLLGNVLVCVLAHHFGKEFTPQVQAAYQKVVAGVANALAHKYH.

Valine 2 carries the post-translational modification N-acetylvaline. A Globin domain is found at 3 to 147; it reads HLTPDEKAAV…VANALAHKYH (145 aa). Threonine 13 bears the Phosphothreonine mark. Residue serine 45 is modified to Phosphoserine. Lysine 60 is modified (N6-acetyllysine). Heme b is bound at residue histidine 64. An N6-acetyllysine modification is found at lysine 83. Histidine 93 lines the heme b pocket. Cysteine 94 carries the post-translational modification S-nitrosocysteine. At lysine 145 the chain carries N6-acetyllysine.

This sequence belongs to the globin family. As to quaternary structure, heterotetramer of two alpha chains and two beta chains. As to expression, red blood cells.

Its function is as follows. Involved in oxygen transport from the lung to the various peripheral tissues. The polypeptide is Hemoglobin subunit beta (HBB) (Colobus polykomos (Western black-and-white colobus monkey)).